Here is an 81-residue protein sequence, read N- to C-terminus: Photosystem I iron-sulfur center (81 aa).

4Fe-4S ferredoxin-type domains are found at residues 1–31 and 37–68; these read MSHTVKIYDTCIGCTQCVRACPTDVLEMVPW and GQIASSPRTEDCVGCKRCETACPTDFLSIRVY. Residues C11, C14, C17, C21, C48, C51, C54, and C58 each coordinate [4Fe-4S] cluster.

The cyanobacterial PSI reaction center is composed of one copy each of PsaA,B,C,D,E,F,I,J,K,L,M and X, and forms trimeric complexes. It depends on [4Fe-4S] cluster as a cofactor.

The protein localises to the cellular thylakoid membrane. It carries out the reaction reduced [plastocyanin] + hnu + oxidized [2Fe-2S]-[ferredoxin] = oxidized [plastocyanin] + reduced [2Fe-2S]-[ferredoxin]. Functionally, apoprotein for the two 4Fe-4S centers FA and FB of photosystem I (PSI); essential for photochemical activity. FB is the terminal electron acceptor of PSI, donating electrons to ferredoxin. The C-terminus interacts with PsaA/B/D and helps assemble the protein into the PSI complex. Required for binding of PsaD and PsaE to PSI. PSI is a plastocyanin/cytochrome c6-ferredoxin oxidoreductase, converting photonic excitation into a charge separation, which transfers an electron from the donor P700 chlorophyll pair to the spectroscopically characterized acceptors A0, A1, FX, FA and FB in turn. The chain is Photosystem I iron-sulfur center from Acaryochloris marina (strain MBIC 11017).